The following is a 427-amino-acid chain: UPF0229 protein YeaH (427 aa).

Residues 79-90 (NDHFVQNDRIER) are compositionally biased toward basic and acidic residues. A disordered region spans residues 79–110 (NDHFVQNDRIERPQGGGGGSGSGQGQASQDGE). Gly residues predominate over residues 92-102 (QGGGGGSGSGQ).

Belongs to the UPF0229 family.

This chain is UPF0229 protein YeaH, found in Escherichia coli O127:H6 (strain E2348/69 / EPEC).